The primary structure comprises 421 residues: uncharacterized protein (421 aa).

This sequence belongs to the glycosyltransferase 28 family.

This is an uncharacterized protein from Mycobacterium leprae (strain TN).